A 413-amino-acid polypeptide reads, in one-letter code: MGVIELCNTSSICIGRAKPSCCSIERNQRRRIICMASSVPVQEESQQKQRVTGDAFIRPHLLKLSPYQPILPFEVLSTRLGRKPEDIVKLDANENPYGPPPEVIEALGAMKFPYIYPDPESRTLRAALAEDSGLESEYILAGCGADELIDLIMRCVLDPGDMIVDCPPTFTMYEFDAAVNGAHVIKVPRNPDFSLDVERIAEVVEHEKPKCIFLTSPNNPDGSIVDDETLLKILDLPILVILDEAYVEFSGMESKMKWVKKHENLIVLRTFSKRAGLAGLRVGYGAFPKSIIEFLWRAKQPYNVSVAAEVAACAALKNPTYLENVKVALVQERERLFNLLKEVPFLDPYPSYSNFILCKVTSGMDAKKLKEDLATMGVMIRHYNSKELKGYVRVSVGKPEHTEALMKCLKHFY.

The transit peptide at 1 to 35 (MGVIELCNTSSICIGRAKPSCCSIERNQRRRIICM) directs the protein to the chloroplast. Lys273 carries the N6-(pyridoxal phosphate)lysine modification.

This sequence belongs to the class-II pyridoxal-phosphate-dependent aminotransferase family. Histidinol-phosphate aminotransferase subfamily. As to quaternary structure, homodimer. The cofactor is pyridoxal 5'-phosphate. As to expression, mainly expressed in green tissues.

Its subcellular location is the plastid. The protein localises to the chloroplast. It carries out the reaction L-histidinol phosphate + 2-oxoglutarate = 3-(imidazol-4-yl)-2-oxopropyl phosphate + L-glutamate. It functions in the pathway amino-acid biosynthesis; L-histidine biosynthesis; L-histidine from 5-phospho-alpha-D-ribose 1-diphosphate: step 7/9. The chain is Histidinol-phosphate aminotransferase, chloroplastic (HPA) from Nicotiana tabacum (Common tobacco).